The primary structure comprises 536 residues: Indolin-2-one monooxygenase (536 aa).

Residues Gly18–Ile34 traverse the membrane as a helical segment. Cys480 contributes to the heme binding site.

This sequence belongs to the cytochrome P450 family. Heme serves as cofactor.

It localises to the membrane. It catalyses the reaction indolin-2-one + reduced [NADPH--hemoprotein reductase] + O2 = 3-hydroxyindolin-2-one + oxidized [NADPH--hemoprotein reductase] + H2O + H(+). The protein operates within secondary metabolite biosynthesis; 2,4-dihydroxy-1,4-benzoxazin-3-one biosynthesis; 2,4-dihydroxy-1,4-benzoxazin-3-one from indoleglycerol phosphate: step 3/5. Functionally, catalyzes the conversion of indolin-2-one to 3-hydroxyindolin-2-one. This is Indolin-2-one monooxygenase (CYP71C2) from Zea mays (Maize).